A 304-amino-acid chain; its full sequence is MAKYTPNELADTLKEGLLSFPVTSFDANLQFDEENYRKHLAWQASFPVAGLFAAGGTGEGFSLTPAESERVVRTAVDEVGSRVPVLASAGGSTAQAIENAKAAEAAGADGILLLPPYLTEADQAGLVEHVSAVCRATSLGVIIYNRANAIYKDTTVATLADRHANLIGFKDGVGDLEHDARVYAKLGDRLFYLGGLPTAETFALPLLQLGMSTYSSAMYNFVPQFALDFYQDVRNQDRAAVNKKLNDFVIPYLDIRDRVKGYSVSIVKGGLDAIGRSAGPVRTPLQNLAPQDLADLKALIATVS.

Belongs to the DapA family.

It catalyses the reaction 5-dehydro-4-deoxy-D-glucarate + H(+) = 2,5-dioxopentanoate + CO2 + H2O. It functions in the pathway carbohydrate acid metabolism; D-glucarate degradation; 2,5-dioxopentanoate from D-glucarate: step 2/2. In Pseudarthrobacter chlorophenolicus (strain ATCC 700700 / DSM 12829 / CIP 107037 / JCM 12360 / KCTC 9906 / NCIMB 13794 / A6) (Arthrobacter chlorophenolicus), this protein is Probable 5-dehydro-4-deoxyglucarate dehydratase.